The following is a 255-amino-acid chain: Glioma pathogenesis-related protein 1 (255 aa).

Positions methionine 1–serine 17 are cleaved as a signal peptide. An SCP domain is found at glutamine 39 to tyrosine 164. A helical transmembrane segment spans residues serine 224 to valine 244.

Belongs to the CRISP family.

Its subcellular location is the membrane. In Mus musculus (Mouse), this protein is Glioma pathogenesis-related protein 1 (Glipr1).